A 447-amino-acid polypeptide reads, in one-letter code: Putative branched-chain amino acid carrier protein SAR1419 (447 aa).

The next 12 membrane-spanning stretches (helical) occupy residues 6-26 (WVIG…IFPP), 40-60 (ILAF…VGAL), 74-94 (PKFS…LFAI), 114-134 (SSIA…YICL), 143-163 (IGSL…IKAY), 193-213 (GYLT…VNAV), 229-249 (LTAG…LGYI), 290-310 (LLGI…IVAV), 326-346 (FVLV…NAVI), 350-370 (IPVL…ILIA), 382-402 (IPVI…LGWL), and 417-437 (LEWF…GIFV).

This sequence belongs to the branched chain amino acid transporter family.

Its subcellular location is the cell membrane. Its function is as follows. Component of the transport system for branched-chain amino acids (leucine, isoleucine and valine), which is coupled to a proton motive force (Potential). Contributes to NaCl tolerance. This chain is Putative branched-chain amino acid carrier protein SAR1419, found in Staphylococcus aureus (strain MRSA252).